Reading from the N-terminus, the 593-residue chain is Maternal uncoordinated protein 2 (593 aa).

Belongs to the SCC4/mau-2 family. As to quaternary structure, may heterodimerize with scc-2/SCC2 to form the cohesin loading complex.

The protein resides in the nucleus. The protein localises to the nucleoplasm. It localises to the cytoplasm. Its function is as follows. Plays an important role in the loading of the cohesin complex on to DNA. Forms a heterodimeric complex (also known as cohesin loading complex) with scc-2/SCC2 which mediates the loading of the cohesin complex onto chromatin. Required for normal development until the fourth larval stage. Functions cell autonomously to guide migrations during the development of the nervous system. Participates in the guidance of mechanosensory neuron AVM by a slt-1-independent mechanism. Regulates chromosome segregation in early embryos. The polypeptide is Maternal uncoordinated protein 2 (Caenorhabditis elegans).